Reading from the N-terminus, the 344-residue chain is uncharacterized protein (344 aa).

6 helical membrane-spanning segments follow: residues 155 to 175 (IARI…IFLV), 181 to 201 (WGLG…AYGW), 221 to 241 (LSFI…VNGF), 254 to 274 (ISSF…FALL), 291 to 311 (FTII…AAYV), and 319 to 339 (ALQN…IGVF).

It to M.jannaschii MJ1032.

The protein localises to the cell membrane. This is an uncharacterized protein from Archaeoglobus fulgidus (strain ATCC 49558 / DSM 4304 / JCM 9628 / NBRC 100126 / VC-16).